A 157-amino-acid polypeptide reads, in one-letter code: uncharacterized protein (157 aa).

This is an uncharacterized protein from Aquifex aeolicus (strain VF5).